Reading from the N-terminus, the 414-residue chain is Glutamyl-tRNA reductase (414 aa).

Residues 48–51 (TCNR), Ser-104, 109–111 (EAQ), and Gln-115 contribute to the substrate site. The Nucleophile role is filled by Cys-49. Residue 184–189 (GAGEMI) participates in NADP(+) binding.

Belongs to the glutamyl-tRNA reductase family. In terms of assembly, homodimer.

The enzyme catalyses (S)-4-amino-5-oxopentanoate + tRNA(Glu) + NADP(+) = L-glutamyl-tRNA(Glu) + NADPH + H(+). It functions in the pathway porphyrin-containing compound metabolism; protoporphyrin-IX biosynthesis; 5-aminolevulinate from L-glutamyl-tRNA(Glu): step 1/2. Functionally, catalyzes the NADPH-dependent reduction of glutamyl-tRNA(Glu) to glutamate 1-semialdehyde (GSA). The polypeptide is Glutamyl-tRNA reductase (Methylobacillus flagellatus (strain ATCC 51484 / DSM 6875 / VKM B-1610 / KT)).